A 449-amino-acid chain; its full sequence is MKDLTAEAAISPSDDNLLPALASLREGHPDKGILKLLAQLKIDHPEWAVSEKRFRKALQLAPCPGGGEADPKEKALVADTGLDPSIDVKSIAPKVEVKMFAGGKGKGLVAKEELKQGEMLWQEEPWIVTSDPGHYSLLTQSMMCSQCFSLFARPSPPISVPCPHCTTAHFCNRLCYTKSLSSSHPPLLCPGLNPDASSLMNFIRKRGERSVEGVAKILARWRGEREWDAKGKAEEMEKRIWKGMARVSQKRKEMERREWSYISKARMEEWHLIHIMLTNVLNPSPTHENYKPFQRLLISQHPRRSKPVPLTEKEVKRWFSFESFLELLGLVGLNQEDSGGLYALHAHMNHSCEPNIQVRNLPKSYTPPTQDTLPVNLPPPIQAGDRVSNKLTILARHEIQPGEELTISYVNMKMSRDERRQALREGYGFWCACDRCMREKEQPNGEKAE.

Positions 93–410 constitute an SET domain; sequence PKVEVKMFAG…PGEELTISYV (318 aa).

Belongs to the class V-like SAM-binding methyltransferase superfamily. Histone-lysine methyltransferase family. SET5 subfamily.

It is found in the nucleus. The protein resides in the chromosome. Its subcellular location is the cytoplasm. The catalysed reaction is L-lysyl-[histone] + S-adenosyl-L-methionine = N(6)-methyl-L-lysyl-[histone] + S-adenosyl-L-homocysteine + H(+). Histone methyltransferase that monomethylates 'Lys-5', 'Lys-8' and 'Lys-12' of histone H4 (H4K5me1, H4K8me1 and H4K12me1, respectively), thereby controlling gene expression and remodeling chromatin structures. The sequence is that of Histone-lysine N-methyltransferase SET5 (SET5) from Cryptococcus neoformans var. neoformans serotype D (strain B-3501A) (Filobasidiella neoformans).